The chain runs to 31 residues: Cyclotide vibi-F (31 aa).

A cross-link (cyclopeptide (Gly-Asn)) is located at residues 1–31 (GTIPCGESCVFIPCLTSALGCSCKSKVCYKN). 3 disulfide bridges follow: Cys-5–Cys-21, Cys-9–Cys-23, and Cys-14–Cys-28.

This is a cyclic peptide.

In terms of biological role, probably participates in a plant defense mechanism. The polypeptide is Cyclotide vibi-F (Viola biflora (Yellow wood violet)).